Reading from the N-terminus, the 285-residue chain is HTH-type transcriptional regulator MurR (285 aa).

An HTH rpiR-type domain is found at 1 to 77 (MLYLTKIRNA…MALIGEYSAS (77 aa)). A DNA-binding region (H-T-H motif) is located at residues 37–56 (SRKMAKQLGISQSSIVKFAQ). Residues 128-268 (IIEVISKAPF…FVGLVQLNDV (141 aa)) form the SIS domain.

As to quaternary structure, homotetramer.

Its pathway is amino-sugar metabolism; N-acetylmuramate degradation [regulation]. Represses the expression of the murPQ operon involved in the uptake and degradation of N-acetylmuramic acid (MurNAc). Binds to two adjacent inverted repeats within the operator region. MurNAc 6-phosphate, the substrate of MurQ, is the specific inducer that weakens binding of MurR to the operator. This chain is HTH-type transcriptional regulator MurR, found in Escherichia coli O157:H7.